The chain runs to 115 residues: Large ribosomal subunit protein bL20 (115 aa).

Belongs to the bacterial ribosomal protein bL20 family.

Its function is as follows. Binds directly to 23S ribosomal RNA and is necessary for the in vitro assembly process of the 50S ribosomal subunit. It is not involved in the protein synthesizing functions of that subunit. This Cytophaga hutchinsonii (strain ATCC 33406 / DSM 1761 / CIP 103989 / NBRC 15051 / NCIMB 9469 / D465) protein is Large ribosomal subunit protein bL20.